Here is a 345-residue protein sequence, read N- to C-terminus: MRKRISAIIMTLFMVLVSCNSGGVAEDPKTVYLTSIANLGKGFLDVFVTFGDMVAGAFGIKADTKKSDIGKYFNDIEKTMTTVKKRLQDEVAKNGNYVKVKEVVDKFVADVLDKIAAGAKKQLRATGDAAIGMLLNEDAAPAEVASVNSLVKGIKEIVGVVLKDNEGDAAATKTADAEKKSVGKLLGKGAADGTETQAAAASASIGAITGADILQAIAKSGKAGAGEIKIEEAKNAAEIAAAKADSKDLAIDSAKKDAVIAAGIALRAMAKDGKFAAKNNEEKSANAVNGAAASAVGKTLSTLIIAIRNTVDSGLKTINEALATVKQEDKSAEATNPAEATTSGQ.

Residues 1-18 (MRKRISAIIMTLFMVLVS) form the signal peptide. Cys19 is lipidated: N-palmitoyl cysteine. The S-diacylglycerol cysteine moiety is linked to residue Cys19.

The protein belongs to the variable large protein (Vlp) family. Delta subfamily.

The protein localises to the cell outer membrane. Its function is as follows. The Vlp and Vsp proteins are antigenically distinct proteins, only one vlp or vsp gene is transcriptionally active at any one time. Switching between these genes is a mechanism of host immune response evasion. The chain is Variable large protein 23 from Borrelia hermsii.